The sequence spans 423 residues: Probable sodium/metabolite cotransporter BASS3, chloroplastic (423 aa).

The N-terminal 45 residues, 1 to 45, are a transit peptide targeting the chloroplast; that stretch reads MAAAVAASSSSSSSSCAAVGVATASHPHRHRQARFVVSPPAPASP. 9 helical membrane passes run 106–126, 138–158, 165–187, 192–214, 231–251, 254–274, 287–307, 318–338, and 380–400; these read ALLPLVVAATAVAALGNPATF, LGGIMLSIGIKLSIDDFALAF, TIGYMAQYIVKPLMGVLIARAFG, FFAGFVLTCCVSGAQLSSYASFL, ISSVVVTPVLTGLLIGSVVPV, IAMAKSILQVVLVPVTLGLLL, PVMPFVAMLCTSLCIGSPLAI, FLLLLPIVTFHIAAFIVGYWI, and VPAACSVVIMAIFGLTLASYW.

It belongs to the bile acid:sodium symporter (BASS) (TC 2.A.28) family.

The protein resides in the membrane. It is found in the plastid. The protein localises to the chloroplast envelope. May function as sodium-coupled metabolite transporter across the chloroplast envelope. The sequence is that of Probable sodium/metabolite cotransporter BASS3, chloroplastic (BASS3) from Oryza sativa subsp. japonica (Rice).